The primary structure comprises 595 residues: Aspartate--tRNA(Asp/Asn) ligase (595 aa).

Glu-175 contacts L-aspartate. Residues 199–202 (QQYK) are aspartate. L-aspartate-binding residues include Arg-221 and His-454. Residue 221–223 (RDE) coordinates ATP. Position 488 (Glu-488) interacts with ATP. Arg-495 contacts L-aspartate. 540–543 (GIDR) lines the ATP pocket.

It belongs to the class-II aminoacyl-tRNA synthetase family. Type 1 subfamily. Homodimer.

Its subcellular location is the cytoplasm. It catalyses the reaction tRNA(Asx) + L-aspartate + ATP = L-aspartyl-tRNA(Asx) + AMP + diphosphate. In terms of biological role, aspartyl-tRNA synthetase with relaxed tRNA specificity since it is able to aspartylate not only its cognate tRNA(Asp) but also tRNA(Asn). Reaction proceeds in two steps: L-aspartate is first activated by ATP to form Asp-AMP and then transferred to the acceptor end of tRNA(Asp/Asn). The polypeptide is Aspartate--tRNA(Asp/Asn) ligase (Sinorhizobium fredii (strain NBRC 101917 / NGR234)).